A 714-amino-acid polypeptide reads, in one-letter code: Nucleolin (714 aa).

The disordered stretch occupies residues Met-1–Glu-303. Lys-9, Lys-15, and Lys-16 each carry N6-acetyllysine. Residues Val-24–Gly-42 are compositionally biased toward acidic residues. Phosphoserine is present on residues Ser-28, Ser-34, Ser-40, and Ser-41. The segment covering Ala-55–Pro-106 has biased composition (low complexity). Copy 1 of the repeat occupies Ala-57–Val-64. The interval Ala-57–Lys-134 is 8 X 8 AA tandem repeats of X-T-P-X-K-K-X-X. A Phosphoserine modification is found at Ser-66. Residues Thr-68, Thr-75, Thr-83, and Thr-91 each carry the phosphothreonine modification. 3 repeat units span residues Pro-74–Ala-81, Val-82–Ala-89, and Ala-90–Val-97. N6-acetyllysine is present on Lys-95. Thr-98 is modified (phosphothreonine). One copy of the 5; truncated repeat lies at Thr-98–Val-103. Lys-101 is subject to N6-acetyllysine. Repeat unit 6 spans residues Ala-104 to Ala-111. Phosphothreonine is present on Thr-105. The residue at position 108 (Lys-108) is an N6-acetyllysine. At Thr-112 the chain carries Phosphothreonine. Lys-115 carries the post-translational modification N6-acetyllysine. 2 tandem repeats follow at residues Ala-119–Ala-126 and Val-127–Lys-134. Thr-120 carries the phosphothreonine modification. Lys-123 carries the N6-acetyllysine modification. Residues Ser-144 and Ser-157 each carry the phosphoserine modification. Over residues Ser-144 to Glu-170 the composition is skewed to acidic residues. Positions Pro-171–Ala-187 are enriched in low complexity. The residue at position 188 (Ser-188) is a Phosphoserine. Over residues Ser-188 to Met-216 the composition is skewed to acidic residues. A Phosphothreonine modification is found at Thr-219. A compositionally biased stretch (acidic residues) spans Glu-240 to Glu-272. Over residues Met-285 to Gly-301 the composition is skewed to basic and acidic residues. A Glycyl lysine isopeptide (Lys-Gly) (interchain with G-Cter in SUMO1); alternate cross-link involves residue Lys-298. Lys-298 participates in a covalent cross-link: Glycyl lysine isopeptide (Lys-Gly) (interchain with G-Cter in SUMO2); alternate. Ser-302 is subject to Phosphoserine. 2 RRM domains span residues Phe-308 to Gly-384 and Arg-394 to Glu-467. At Lys-319 the chain carries N6-acetyllysine. Lys-325 participates in a covalent cross-link: Glycyl lysine isopeptide (Lys-Gly) (interchain with G-Cter in SUMO1); alternate. A Glycyl lysine isopeptide (Lys-Gly) (interchain with G-Cter in SUMO2); alternate cross-link involves residue Lys-325. Residue Lys-349 is modified to N6-acetyllysine. Phosphoserine is present on Ser-357. The residue at position 368 (Thr-368) is a Phosphothreonine. Lys-371 participates in a covalent cross-link: Glycyl lysine isopeptide (Lys-Gly) (interchain with G-Cter in SUMO2). A Glycyl lysine isopeptide (Lys-Gly) (interchain with G-Cter in SUMO2); alternate cross-link involves residue Lys-378. The residue at position 378 (Lys-378) is an N6-acetyllysine; alternate. Lys-399 is modified (N6-acetyllysine). Phosphoserine is present on Ser-402. Thr-406 carries the post-translational modification Phosphothreonine. 2 positions are modified to N6-acetyllysine: Lys-428 and Lys-445. Phosphoserine occurs at positions 459 and 461. N6-acetyllysine is present on residues Lys-468 and Lys-477. In terms of domain architecture, RRM 3 spans Lys-486–Pro-560. A Glycyl lysine isopeptide (Lys-Gly) (interchain with G-Cter in SUMO2); alternate cross-link involves residue Lys-513. Lys-513 is subject to N6-acetyllysine; alternate. Lys-521 carries the post-translational modification N6-acetyllysine. Phosphoserine is present on Ser-563. Lys-572 is modified (N6-acetyllysine). Residues Lys-572–Pro-647 form the RRM 4 domain. Lys-577 participates in a covalent cross-link: Glycyl lysine isopeptide (Lys-Gly) (interchain with G-Cter in SUMO2); alternate. Lys-577 is subject to N6-acetyllysine; alternate. Ser-580 is subject to Phosphoserine. A Glycyl lysine isopeptide (Lys-Gly) (interchain with G-Cter in SUMO1); alternate cross-link involves residue Lys-589. Residue Lys-589 forms a Glycyl lysine isopeptide (Lys-Gly) (interchain with G-Cter in SUMO2); alternate linkage. Residues Ser-591 and Ser-619 each carry the phosphoserine modification. Residue Lys-624 forms a Glycyl lysine isopeptide (Lys-Gly) (interchain with G-Cter in SUMO2) linkage. Positions Leu-642–Glu-714 are disordered. Position 646 is an N6-acetyllysine (Lys-646). Over residues Glu-650–Asp-703 the composition is skewed to gly residues. Arg-656, Arg-660, Arg-666, Arg-670, Arg-674, Arg-680, Arg-682, Arg-688, and Arg-692 each carry asymmetric dimethylarginine. Asymmetric dimethylarginine; alternate is present on Arg-695. Arg-695 carries the omega-N-methylarginine; alternate modification.

Identified in a IGF2BP1-dependent mRNP granule complex containing untranslated mRNAs. Component of the SWAP complex that consists of NPM1, NCL/nucleolin, PARP1 and SWAP70. Component of a complex which is at least composed of HTATSF1/Tat-SF1, the P-TEFb complex components CDK9 and CCNT1, RNA polymerase II, SUPT5H, and NCL/nucleolin. Interacts with AICDA. Interacts with APTX. Interacts with C1QBP. Interacts with ERBB4. Interacts (via C-terminus) with FMR1 isoform 6 (via N-terminus). Interacts with GZF1; this interaction is important for nucleolar localization of GZF1. Interacts with NSUN2. Interacts with NVL. Interacts (via N-terminus domain) with SETX. Interacts (via RRM1 and C-terminal RRM4/Arg/Gly-rich domains) with TERT; the interaction is important for nucleolar localization of TERT. Interacts with WDR46. Interacts with ZFP36. Interacts with LRRC34. Interacts with RRP1B. Interacts with HNRNPU; this interaction occurs during mitosis. Interacts with RIOK1; RIOK1 recruits NCL to PRMT5 for symmetrically methylation. Interacts with ZBTB7B. Interacts with MDK; this interaction promotes NCL clustering and lateral movements of this complex into lipid rafts leading to MDK internalization. Interacts with HDGF. Interacts with ALKBH2. Interacts with IGFBP5; this interaction is necessary for IGFBP5 localization to the nucleus. Interacts with DDX24 (when ubiquitinated); this interaction may be important during ribosome biogenesis. Post-translationally, some glutamate residues are glycylated by TTLL8. This modification occurs exclusively on glutamate residues and results in a glycine chain on the gamma-carboxyl group. Symmetrically methylated by PRMT5.

It is found in the nucleus. It localises to the nucleolus. Its subcellular location is the cytoplasm. Nucleolin is the major nucleolar protein of growing eukaryotic cells. It is found associated with intranucleolar chromatin and pre-ribosomal particles. It induces chromatin decondensation by binding to histone H1. It is thought to play a role in pre-rRNA transcription and ribosome assembly. May play a role in the process of transcriptional elongation. Binds RNA oligonucleotides with 5'-UUAGGG-3' repeats more tightly than the telomeric single-stranded DNA 5'-TTAGGG-3' repeats. This chain is Nucleolin (NCL), found in Mesocricetus auratus (Golden hamster).